The sequence spans 153 residues: UPF0179 protein AF_2154 (153 aa).

The protein belongs to the UPF0179 family.

In Archaeoglobus fulgidus (strain ATCC 49558 / DSM 4304 / JCM 9628 / NBRC 100126 / VC-16), this protein is UPF0179 protein AF_2154.